Here is a 615-residue protein sequence, read N- to C-terminus: Neurosecretory protein VGF (615 aa).

Residues 1–22 (MKALRLSASALFCLLLINGLGA) form the signal peptide. Disordered stretches follow at residues 22 to 201 (AAPP…ESPG) and 218 to 257 (PERA…PKTH). 2 stretches are compositionally biased toward pro residues: residues 25–35 (PGRPEAQPPPL) and 129–141 (PESP…PRPQ). A compositionally biased stretch (low complexity) spans 179-194 (ETAAAETETRTHTLTR). Glutamine 310 carries the pyrrolidone carboxylic acid modification. The disordered stretch occupies residues 342–600 (RQRGLGGRGL…EAEERRLQEQ (259 aa)). The segment covering 378–394 (VGEEDEEAAEAEAEAEE) has biased composition (acidic residues). Basic and acidic residues predominate over residues 415–433 (AEDKRSQEETPGHRRKEAE). Serine 420 carries the phosphoserine; by FAM20C modification. A Phosphothreonine; by FAM20C modification is found at threonine 424. Residues 434 to 448 (GTEEGGEEEDDEEMD) show a composition bias toward acidic residues. The span at 487–497 (PPEPVPPPRAA) shows a compositional bias: pro residues. Proline 577 is subject to Proline amide. Basic and acidic residues predominate over residues 577-599 (PGREAQARRAQEEAEAEERRLQE).

In terms of assembly, interacts with HSPA8 on cell membrane. Interacts with C3AR1. Interacts with C1QBP. Post-translationally, multiple peptides are derived from VGF, with activities in synaptic plasticity, antidepression, penile erection, autonomic activation, and increases in energy expenditure. Central and peripheral nervous systems, synthesized exclusively in neuronal and neuroendocrine cells.

It is found in the secreted. The protein localises to the cytoplasmic vesicle. The protein resides in the secretory vesicle. Its function is as follows. Secreted polyprotein that is packaged and proteolytically processed by prohormone convertases PCSK1 and PCSK2 in a cell-type-specific manner. VGF and peptides derived from its processing play many roles in neurogenesis and neuroplasticity associated with learning, memory, depression and chronic pain. Functionally, plays a role in the control of body fluid homeostasis by regulating vasopressin release. Suppresses presynaptic glutamatergic neurons connected to vasopressin neurons. In terms of biological role, plays a role in the control of body fluid homeostasis by regulating vasopressin release. Activates GABAergic interneurons which are inhibitory neurons of the nervous system and thereby suppresses presynaptic glutamatergic neurons. Also stimulates feeding behavior in an orexin-dependent manner in the hypothalamus. Functions as a positive regulator for the activation of orexin neurons resulting in elevated gastric acid secretion and gastric emptying. Secreted multifunctional neuropeptide that binds to different cell receptors and thereby plays multiple physiological roles including modulation of energy expenditure, pain, response to stress, gastric regulation, glucose homeostasis as well as lipolysis. Activates the G-protein-coupled receptor C3AR1 via a folding-upon-binding mechanism leading to enhanced lipolysis in adipocytes. Interacts with C1QBP receptor in macrophages and microglia causing increased levels of intracellular calcium and hypersensitivity. Its function is as follows. Plays a role in the regulation of memory formation and depression-related behaviors potentially by influencing synaptic plasticity and neurogenesis. Induces acute and transient activation of the NTRK2/TRKB receptor and subsequent CREB phosphorylation. Also induces insulin secretion in insulinoma cells by increasing intracellular calcium mobilization. Functionally, has bactericidal activity against M.luteus, and antifungal activity against P. Pastoris. This chain is Neurosecretory protein VGF (VGF), found in Homo sapiens (Human).